Reading from the N-terminus, the 226-residue chain is Leucyl/phenylalanyl-tRNA--protein transferase (226 aa).

Belongs to the L/F-transferase family.

It localises to the cytoplasm. The enzyme catalyses N-terminal L-lysyl-[protein] + L-leucyl-tRNA(Leu) = N-terminal L-leucyl-L-lysyl-[protein] + tRNA(Leu) + H(+). It carries out the reaction N-terminal L-arginyl-[protein] + L-leucyl-tRNA(Leu) = N-terminal L-leucyl-L-arginyl-[protein] + tRNA(Leu) + H(+). The catalysed reaction is L-phenylalanyl-tRNA(Phe) + an N-terminal L-alpha-aminoacyl-[protein] = an N-terminal L-phenylalanyl-L-alpha-aminoacyl-[protein] + tRNA(Phe). In terms of biological role, functions in the N-end rule pathway of protein degradation where it conjugates Leu, Phe and, less efficiently, Met from aminoacyl-tRNAs to the N-termini of proteins containing an N-terminal arginine or lysine. In Pseudomonas putida (strain ATCC 47054 / DSM 6125 / CFBP 8728 / NCIMB 11950 / KT2440), this protein is Leucyl/phenylalanyl-tRNA--protein transferase.